Here is a 105-residue protein sequence, read N- to C-terminus: Met repressor (105 aa).

It belongs to the MetJ family. In terms of assembly, homodimer.

The protein resides in the cytoplasm. Its function is as follows. This regulatory protein, when combined with SAM (S-adenosylmethionine) represses the expression of the methionine regulon and of enzymes involved in SAM synthesis. The polypeptide is Met repressor (Salmonella dublin (strain CT_02021853)).